Consider the following 72-residue polypeptide: Large ribosomal subunit protein uL29 (72 aa).

Belongs to the universal ribosomal protein uL29 family.

This is Large ribosomal subunit protein uL29 (rpmC) from Treponema pallidum (strain Nichols).